The following is an 814-amino-acid chain: Lon protease 1 (814 aa).

Over residues 1 to 17 the composition is skewed to basic and acidic residues; sequence MTDDRDKTNEDPEKIIE. Residues 1 to 28 form a disordered region; the sequence is MTDDRDKTNEDPEKIIEADFNPEDPDDA. The region spanning 49-245 is the Lon N-terminal domain; sequence LPIIPLRPRP…KVLVLLKKEL (197 aa). ATP is bound at residue 398–405; that stretch reads GPPGVGKT. The Lon proteolytic domain maps to 633 to 814; that stretch reads EDVPGVVTGL…YRDVYQVAFG (182 aa). Active-site residues include Ser-721 and Lys-764.

This sequence belongs to the peptidase S16 family. As to quaternary structure, homohexamer. Organized in a ring with a central cavity.

The protein localises to the cytoplasm. It carries out the reaction Hydrolysis of proteins in presence of ATP.. Functionally, ATP-dependent serine protease that mediates the selective degradation of mutant and abnormal proteins as well as certain short-lived regulatory proteins. Required for cellular homeostasis and for survival from DNA damage and developmental changes induced by stress. Degrades polypeptides processively to yield small peptide fragments that are 5 to 10 amino acids long. Binds to DNA in a double-stranded, site-specific manner. This is Lon protease 1 from Syntrophotalea carbinolica (strain DSM 2380 / NBRC 103641 / GraBd1) (Pelobacter carbinolicus).